A 204-amino-acid polypeptide reads, in one-letter code: Secreted phosphoprotein 24 (204 aa).

Residues Met1–Gly23 form the signal peptide. Intrachain disulfides connect Cys86-Cys97 and Cys110-Cys128. Ser90 carries the phosphoserine modification. Residues Ser138, Ser139, Ser166, and Ser175 each carry the phosphoserine modification. The tract at residues Met179–Glu204 is disordered.

Belongs to the SPP2 family. Multiply phosphorylated at serine residues. Post-translationally, phosphorylation sites are present in the extracellular medium.

Its subcellular location is the secreted. Functionally, could coordinate an aspect of bone turnover. The chain is Secreted phosphoprotein 24 (SPP2) from Sus scrofa (Pig).